A 189-amino-acid polypeptide reads, in one-letter code: Elongation factor P (189 aa).

It belongs to the elongation factor P family.

It is found in the cytoplasm. Its pathway is protein biosynthesis; polypeptide chain elongation. Involved in peptide bond synthesis. Stimulates efficient translation and peptide-bond synthesis on native or reconstituted 70S ribosomes in vitro. Probably functions indirectly by altering the affinity of the ribosome for aminoacyl-tRNA, thus increasing their reactivity as acceptors for peptidyl transferase. The polypeptide is Elongation factor P (Pseudomonas syringae pv. syringae (strain B728a)).